The chain runs to 137 residues: Small ribosomal subunit protein uS12 (137 aa).

Positions 1-55 (MPTINQLVRKPRKSKTKQSDSPALNRGFNSKKKQFTNLNSPQKRGVCTRVGTMTP) are disordered. 3-methylthioaspartic acid is present on D102. A disordered region spans residues 118–137 (SGVDGRRQGRSLYGTKKPKN).

The protein belongs to the universal ribosomal protein uS12 family. Part of the 30S ribosomal subunit. Contacts proteins S8 and S17. May interact with IF1 in the 30S initiation complex.

Its function is as follows. With S4 and S5 plays an important role in translational accuracy. Functionally, interacts with and stabilizes bases of the 16S rRNA that are involved in tRNA selection in the A site and with the mRNA backbone. Located at the interface of the 30S and 50S subunits, it traverses the body of the 30S subunit contacting proteins on the other side and probably holding the rRNA structure together. The combined cluster of proteins S8, S12 and S17 appears to hold together the shoulder and platform of the 30S subunit. This chain is Small ribosomal subunit protein uS12, found in Staphylococcus epidermidis (strain ATCC 35984 / DSM 28319 / BCRC 17069 / CCUG 31568 / BM 3577 / RP62A).